We begin with the raw amino-acid sequence, 1938 residues long: Myosin-4 (1938 aa).

Positions 33 to 82 (DAKSSVFVADPKESFVKATVQSREGGKVTAKTEAGATVTVKEDQVFPMNP) constitute a Myosin N-terminal SH3-like domain. Residue Ser36 is modified to Phosphoserine. A phosphothreonine mark is found at Thr64 and Thr69. Residues 86-781 (DKIEDMAMMT…LLGLLEEMRD (696 aa)) enclose the Myosin motor domain. 179 to 186 (GESGAGKT) is a binding site for ATP. A Phosphotyrosine modification is found at Tyr389. Ser392 carries the post-translational modification Phosphoserine. Thr419 carries the post-translational modification Phosphothreonine. Phosphotyrosine is present on Tyr424. The tract at residues 658-680 (LNKLMTNLRSTHPHFVRCIIPNE) is actin-binding. Position 756 is a pros-methylhistidine (His756). The segment at 760-774 (KFGHTKVFFKAGLLG) is actin-binding. Positions 784–813 (LAQLITRTQAMCRGFLARVEYKKMVERRES) constitute an IQ domain. Positions 845–1926 (SAETEKEMAN…ESQVNKLRVK (1082 aa)) form a coiled coil. Phosphoserine is present on residues Ser1091, Ser1095, Ser1161, and Ser1236. A Phosphothreonine modification is found at Thr1240. A Phosphoserine modification is found at Ser1242. Thr1254 carries the post-translational modification Phosphothreonine. At Ser1260 the chain carries Phosphoserine. At Thr1264 the chain carries Phosphothreonine. At Ser1277 the chain carries Phosphoserine. Thr1285 carries the post-translational modification Phosphothreonine. Ser1287, Ser1291, Ser1302, and Ser1305 each carry phosphoserine. Residue Tyr1463 is modified to Phosphotyrosine. Phosphothreonine is present on Thr1466. Phosphoserine is present on Ser1473. Phosphotyrosine is present on Tyr1491. Ser1494 is subject to Phosphoserine. Phosphothreonine is present on Thr1500. Ser1513 carries the post-translational modification Phosphoserine. Thr1516 carries the post-translational modification Phosphothreonine. Ser1541, Ser1553, Ser1573, Ser1599, Ser1602, Ser1713, and Ser1725 each carry phosphoserine. Phosphothreonine is present on residues Thr1729 and Thr1735. Position 1738 is a phosphoserine (Ser1738).

The protein belongs to the TRAFAC class myosin-kinesin ATPase superfamily. Myosin family. Muscle myosin is a hexameric protein that consists of 2 heavy chain subunits (MHC), 2 alkali light chain subunits (MLC) and 2 regulatory light chain subunits (MLC-2).

The protein localises to the cytoplasm. The protein resides in the myofibril. In terms of biological role, muscle contraction. In Oryctolagus cuniculus (Rabbit), this protein is Myosin-4 (MYH4).